A 158-amino-acid chain; its full sequence is MNFTSLLQDGIYEVGNGAIVTDQSPYLGITPDYQGAYGFPTHPWGIFFQVVGAILVFGAYLPAVIKVLISKRTENLAIGMWIISIAGLGLLAIFAWLGVSVNPGGFILVALSETLSCIASIIVFALKIANKAKAKAAGMTELEYCNLHYPIVKKLPKR.

The next 3 membrane-spanning stretches (helical) occupy residues 45 to 65 (GIFF…PAVI), 76 to 96 (LAIG…IFAW), and 106 to 126 (FILV…VFAL).

The protein to U.parvum UU007, UU041 and UU042.

It localises to the cell membrane. This is an uncharacterized protein from Ureaplasma parvum serovar 3 (strain ATCC 700970).